Reading from the N-terminus, the 366-residue chain is Fructose-bisphosphate aldolase 1 (366 aa).

Substrate-binding residues include Arg56 and Lys147. Catalysis depends on Glu189, which acts as the Proton acceptor. Lys231 acts as the Schiff-base intermediate with dihydroxyacetone-P in catalysis.

It belongs to the class I fructose-bisphosphate aldolase family. As to expression, ubiquitous.

The catalysed reaction is beta-D-fructose 1,6-bisphosphate = D-glyceraldehyde 3-phosphate + dihydroxyacetone phosphate. It functions in the pathway carbohydrate degradation; glycolysis; D-glyceraldehyde 3-phosphate and glycerone phosphate from D-glucose: step 4/4. Its function is as follows. May be involved in the metabolism of fructose-bisphosphate (beta-D-fructose 1,6-bisphosphate) and of fructose 1-phosphate. The polypeptide is Fructose-bisphosphate aldolase 1 (aldo-1) (Caenorhabditis elegans).